A 334-amino-acid polypeptide reads, in one-letter code: Antho-RFamide neuropeptides (334 aa).

Positions 1–26 (MLVAMTTASYVTILVTLLFHILTINA) are cleaved as a signal peptide. A propeptide spanning residues 27-116 (KTVTKRAKET…REFQGRFGRE (90 aa)) is cleaved from the precursor. 2 stretches are compositionally biased toward basic and acidic residues: residues 115–289 (REQG…RELL) and 303–334 (PQTRFRDVQMTRRNVAKKDKIEESNDEEANKS). The interval 115-334 (REQGRFGREE…ESNDEEANKS (220 aa)) is disordered. The residue at position 120 (F120) is a Phenylalanine amide. The propeptide occupies 122–125 (REED). Residue F129 is modified to Phenylalanine amide. Residues 131–134 (REED) constitute a propeptide that is removed on maturation. F138 is subject to Phenylalanine amide. Positions 140–142 (REE) are excised as a propeptide. A Phenylalanine amide modification is found at F146. The propeptide occupies 148 to 151 (REED). A Phenylalanine amide modification is found at F155. A propeptide spanning residues 157–160 (REED) is cleaved from the precursor. F164 carries the post-translational modification Phenylalanine amide. A propeptide spanning residues 166–169 (REED) is cleaved from the precursor. F173 is modified (phenylalanine amide). Residues 175 to 178 (REEE) constitute a propeptide that is removed on maturation. F182 bears the Phenylalanine amide mark. The propeptide occupies 184 to 187 (REED). The residue at position 191 (F191) is a Phenylalanine amide. Residues 193–196 (REEE) constitute a propeptide that is removed on maturation. Phenylalanine amide is present on F200. The propeptide occupies 202 to 205 (REED). F209 bears the Phenylalanine amide mark. Positions 211–214 (REED) are excised as a propeptide. Residue F218 is modified to Phenylalanine amide. A propeptide spanning residues 220–223 (REEE) is cleaved from the precursor. Position 227 is a phenylalanine amide (F227). A propeptide spanning residues 229–233 (KRDED) is cleaved from the precursor. F237 is subject to Phenylalanine amide. The propeptide occupies 239–242 (KRED). A Phenylalanine amide modification is found at F246. Residues 248-252 (KRDED) constitute a propeptide that is removed on maturation. F256 is modified (phenylalanine amide). A propeptide spanning residues 258 to 262 (KRDED) is cleaved from the precursor. Residue F266 is modified to Phenylalanine amide. Positions 268–271 (KRED) are excised as a propeptide. F275 is subject to Phenylalanine amide. The propeptide occupies 277 to 280 (KRED). A Phenylalanine amide modification is found at F284. Residues 286–334 (RELLAKLNKRTTSIQEDPQTRFRDVQMTRRNVAKKDKIEESNDEEANKS) constitute a propeptide that is removed on maturation.

This sequence belongs to the FARP (FMRFamide related peptide) family. Neurons associated with smooth muscle fibers.

The protein localises to the secreted. Its function is as follows. Not known but it could act as a transmitter at neuromuscular synapses. This chain is Antho-RFamide neuropeptides, found in Calliactis parasitica (Sea anemone).